The sequence spans 559 residues: Dihydroxy-acid dehydratase 2 (559 aa).

Cys53 is a [2Fe-2S] cluster binding site. Asp85 is a binding site for Mg(2+). Cys126 provides a ligand contact to [2Fe-2S] cluster. Residues Asp127 and Lys128 each coordinate Mg(2+). Lys128 carries the N6-carboxylysine modification. Cys195 contributes to the [2Fe-2S] cluster binding site. Glu446 contributes to the Mg(2+) binding site. Ser472 (proton acceptor) is an active-site residue.

This sequence belongs to the IlvD/Edd family. In terms of assembly, homodimer. [2Fe-2S] cluster is required as a cofactor. Requires Mg(2+) as cofactor.

It carries out the reaction (2R)-2,3-dihydroxy-3-methylbutanoate = 3-methyl-2-oxobutanoate + H2O. The enzyme catalyses (2R,3R)-2,3-dihydroxy-3-methylpentanoate = (S)-3-methyl-2-oxopentanoate + H2O. The protein operates within amino-acid biosynthesis; L-isoleucine biosynthesis; L-isoleucine from 2-oxobutanoate: step 3/4. It functions in the pathway amino-acid biosynthesis; L-valine biosynthesis; L-valine from pyruvate: step 3/4. Its function is as follows. Functions in the biosynthesis of branched-chain amino acids. Catalyzes the dehydration of (2R,3R)-2,3-dihydroxy-3-methylpentanoate (2,3-dihydroxy-3-methylvalerate) into 2-oxo-3-methylpentanoate (2-oxo-3-methylvalerate) and of (2R)-2,3-dihydroxy-3-methylbutanoate (2,3-dihydroxyisovalerate) into 2-oxo-3-methylbutanoate (2-oxoisovalerate), the penultimate precursor to L-isoleucine and L-valine, respectively. The sequence is that of Dihydroxy-acid dehydratase 2 from Pseudoalteromonas translucida (strain TAC 125).